Here is a 410-residue protein sequence, read N- to C-terminus: Dihydrolipoyllysine-residue succinyltransferase component of 2-oxoglutarate dehydrogenase complex (410 aa).

The Lipoyl-binding domain maps to 3 to 81 (IINIFIPDLP…QVIGTLLKIG (79 aa)). At Lys-44 the chain carries N6-lipoyllysine. Residues 112–150 (TYSPTVRRLISMHDLRDVDIIQGTGTKNRLTRKDILNYL) enclose the Peripheral subunit-binding (PSBD) domain. Active-site residues include His-381 and Asp-385.

It belongs to the 2-oxoacid dehydrogenase family. In terms of assembly, forms a 24-polypeptide structural core with octahedral symmetry. Part of the 2-oxoglutarate dehydrogenase (OGDH) complex composed of E1 (2-oxoglutarate dehydrogenase), E2 (dihydrolipoamide succinyltransferase) and E3 (dihydrolipoamide dehydrogenase); the complex contains multiple copies of the three enzymatic components (E1, E2 and E3). (R)-lipoate is required as a cofactor.

The catalysed reaction is N(6)-[(R)-dihydrolipoyl]-L-lysyl-[protein] + succinyl-CoA = N(6)-[(R)-S(8)-succinyldihydrolipoyl]-L-lysyl-[protein] + CoA. It participates in amino-acid degradation; L-lysine degradation via saccharopine pathway; glutaryl-CoA from L-lysine: step 6/6. In terms of biological role, E2 component of the 2-oxoglutarate dehydrogenase (OGDH) complex which catalyzes the second step in the conversion of 2-oxoglutarate to succinyl-CoA and CO(2). The polypeptide is Dihydrolipoyllysine-residue succinyltransferase component of 2-oxoglutarate dehydrogenase complex (sucB) (Buchnera aphidicola subsp. Baizongia pistaciae (strain Bp)).